The chain runs to 332 residues: Ornithine carbamoyltransferase 1, catabolic (332 aa).

Carbamoyl phosphate-binding positions include 56 to 59 (STRT), Gln83, Arg107, and 134 to 137 (HPTQ). L-ornithine contacts are provided by residues Asn167, Asp231, and 235–236 (SM). Carbamoyl phosphate is bound by residues 273 to 274 (CL) and Arg318.

Belongs to the aspartate/ornithine carbamoyltransferase superfamily. OTCase family.

The protein localises to the cytoplasm. It catalyses the reaction carbamoyl phosphate + L-ornithine = L-citrulline + phosphate + H(+). It functions in the pathway amino-acid degradation; L-arginine degradation via ADI pathway; carbamoyl phosphate from L-arginine: step 2/2. In terms of biological role, reversibly catalyzes the transfer of the carbamoyl group from carbamoyl phosphate (CP) to the N(epsilon) atom of ornithine (ORN) to produce L-citrulline. This is Ornithine carbamoyltransferase 1, catabolic (arcB1) from Staphylococcus epidermidis (strain ATCC 12228 / FDA PCI 1200).